A 417-amino-acid polypeptide reads, in one-letter code: Gamma-glutamyl phosphate reductase (417 aa).

This sequence belongs to the gamma-glutamyl phosphate reductase family.

It is found in the cytoplasm. The catalysed reaction is L-glutamate 5-semialdehyde + phosphate + NADP(+) = L-glutamyl 5-phosphate + NADPH + H(+). It functions in the pathway amino-acid biosynthesis; L-proline biosynthesis; L-glutamate 5-semialdehyde from L-glutamate: step 2/2. Functionally, catalyzes the NADPH-dependent reduction of L-glutamate 5-phosphate into L-glutamate 5-semialdehyde and phosphate. The product spontaneously undergoes cyclization to form 1-pyrroline-5-carboxylate. The chain is Gamma-glutamyl phosphate reductase from Klebsiella pneumoniae (strain 342).